A 334-amino-acid chain; its full sequence is WD repeat-containing protein 54 (334 aa).

3 WD repeats span residues 162–206 (GHQM…TLLT), 208–247 (IPGF…LHVQ), and 250–289 (AHAR…ESGY).

In terms of assembly, homodimer and homotrimer; forms tight forms of dimers and trimers. Interacts with IZUMO1 and IZUMO1R/JUNO. In terms of processing, cross-linked to tightly form both dimers and trimers by TGM2. Cross-linking enhances the activation of EGF receptor-mediated signaling pathway. Cross-linking is inhibited by EGF. Ubiquitinated. EGF increases ubiquitination. In terms of tissue distribution, expressed in epithelial cells (at protein level). Isoform 3 expression is highly increased in colorectal cancer cells.

Its subcellular location is the vesicle. It localises to the cytoplasm. It is found in the cell membrane. In terms of biological role, plays a role in the adhesion and fusion of the sperm-oocyte membrane through its interactions with IZUMO1 and IZUMO1R/JUNO. When cross-linked to form dimers and trimers, it has a regulatory effect on ERK signaling pathway activity in response to EGF stimulation. Colocalizes with the EGF receptor in WDR54-specific vesicle where it sustains the internalization and controls the degradation of the EGF receptor after EGF stimulation. The protein is WD repeat-containing protein 54 of Homo sapiens (Human).